A 96-amino-acid polypeptide reads, in one-letter code: MGSGYAKKKKEAKLMERQFMEMEASLEQKRFSGEAGNGLVSVTINGKCNLVDVKIKPDCLDPEDPEVVADLFRAAFKAAKAALDSEMSAMHMGMPF.

Belongs to the YbaB/EbfC family. In terms of assembly, homodimer.

It localises to the cytoplasm. It is found in the nucleoid. Functionally, binds to DNA and alters its conformation. May be involved in regulation of gene expression, nucleoid organization and DNA protection. This is Nucleoid-associated protein TC_0612 from Chlamydia muridarum (strain MoPn / Nigg).